We begin with the raw amino-acid sequence, 154 residues long: Lipoprotein signal peptidase (154 aa).

Helical transmembrane passes span 4 to 24, 62 to 82, and 84 to 104; these read IIIPIITILLIALDQLSKLWI, LFTLITIFVVGVAIIYLMKHI, and GSYWLLISLTLIISGGLGNFI. Catalysis depends on residues aspartate 114 and aspartate 130. A helical transmembrane segment spans residues 125 to 145; the sequence is IFNVADSYLTIGIICLMIALW.

The protein belongs to the peptidase A8 family.

It localises to the cell membrane. It catalyses the reaction Release of signal peptides from bacterial membrane prolipoproteins. Hydrolyzes -Xaa-Yaa-Zaa-|-(S,diacylglyceryl)Cys-, in which Xaa is hydrophobic (preferably Leu), and Yaa (Ala or Ser) and Zaa (Gly or Ala) have small, neutral side chains.. Its pathway is protein modification; lipoprotein biosynthesis (signal peptide cleavage). Its function is as follows. This protein specifically catalyzes the removal of signal peptides from prolipoproteins. This Streptococcus agalactiae serotype V (strain ATCC BAA-611 / 2603 V/R) protein is Lipoprotein signal peptidase.